We begin with the raw amino-acid sequence, 305 residues long: Glycine--tRNA ligase alpha subunit (305 aa).

Belongs to the class-II aminoacyl-tRNA synthetase family. In terms of assembly, tetramer of two alpha and two beta subunits.

It is found in the cytoplasm. It carries out the reaction tRNA(Gly) + glycine + ATP = glycyl-tRNA(Gly) + AMP + diphosphate. The polypeptide is Glycine--tRNA ligase alpha subunit (Vibrio campbellii (strain ATCC BAA-1116)).